Consider the following 98-residue polypeptide: Small ribosomal subunit protein uS17 (98 aa).

It belongs to the universal ribosomal protein uS17 family. Part of the 30S ribosomal subunit.

Functionally, one of the primary rRNA binding proteins, it binds specifically to the 5'-end of 16S ribosomal RNA. The chain is Small ribosomal subunit protein uS17 from Leptothrix cholodnii (strain ATCC 51168 / LMG 8142 / SP-6) (Leptothrix discophora (strain SP-6)).